Reading from the N-terminus, the 103-residue chain is Toluene-4-monooxygenase system, effector component (103 aa).

Belongs to the TmoD/XamoD family. As to quaternary structure, the alkene monooxygenase multicomponent enzyme system is composed of an electron transfer component and a monooxygenase component interacting with the effector protein TmoD. The electron transfer component is composed of a ferredoxin reductase (TmoF) and a ferredoxin (TmoC), and the monooxygenase component is formed by a heterohexamer (dimer of heterotrimers) of two alpha subunits (TmoA), two beta subunits (TmoE) and two gamma subunits (TmoB).

It functions in the pathway xenobiotic degradation; toluene degradation. Functionally, effector component of the toluene-4-monooxygenase multicomponent enzyme system which catalyzes the O2- and NADH-dependent hydroxylation of toluene to form p-cresol. Required for optimal efficiency and specificity of the holoenzyme. The sequence is that of Toluene-4-monooxygenase system, effector component from Ectopseudomonas mendocina (Pseudomonas mendocina).